We begin with the raw amino-acid sequence, 360 residues long: 3-dehydroquinate synthase (360 aa).

NAD(+) is bound by residues aspartate 71–lysine 76, glycine 105–aspartate 109, threonine 129–threonine 130, lysine 142, lysine 151, and phenylalanine 169–threonine 172. Zn(2+) contacts are provided by glutamate 184, histidine 247, and histidine 264.

The protein belongs to the sugar phosphate cyclases superfamily. Dehydroquinate synthase family. NAD(+) serves as cofactor. Requires Co(2+) as cofactor. Zn(2+) is required as a cofactor.

It localises to the cytoplasm. The catalysed reaction is 7-phospho-2-dehydro-3-deoxy-D-arabino-heptonate = 3-dehydroquinate + phosphate. Its pathway is metabolic intermediate biosynthesis; chorismate biosynthesis; chorismate from D-erythrose 4-phosphate and phosphoenolpyruvate: step 2/7. In terms of biological role, catalyzes the conversion of 3-deoxy-D-arabino-heptulosonate 7-phosphate (DAHP) to dehydroquinate (DHQ). The protein is 3-dehydroquinate synthase of Buchnera aphidicola subsp. Schizaphis graminum (strain Sg).